We begin with the raw amino-acid sequence, 105 residues long: uncharacterized protein (105 aa).

2 consecutive transmembrane segments (helical) span residues 7–26 (VLSV…WLSL) and 30–52 (VDMT…LISI).

Its subcellular location is the cell membrane. This is an uncharacterized protein from Archaeoglobus fulgidus (strain ATCC 49558 / DSM 4304 / JCM 9628 / NBRC 100126 / VC-16).